Reading from the N-terminus, the 172-residue chain is 3-hydroxydecanoyl-[acyl-carrier-protein] dehydratase (172 aa).

The active site involves H71.

The protein belongs to the thioester dehydratase family. FabA subfamily. Homodimer.

The protein localises to the cytoplasm. It catalyses the reaction a (3R)-hydroxyacyl-[ACP] = a (2E)-enoyl-[ACP] + H2O. It carries out the reaction (3R)-hydroxydecanoyl-[ACP] = (2E)-decenoyl-[ACP] + H2O. The catalysed reaction is (2E)-decenoyl-[ACP] = (3Z)-decenoyl-[ACP]. Its pathway is lipid metabolism; fatty acid biosynthesis. In terms of biological role, necessary for the introduction of cis unsaturation into fatty acids. Catalyzes the dehydration of (3R)-3-hydroxydecanoyl-ACP to E-(2)-decenoyl-ACP and then its isomerization to Z-(3)-decenoyl-ACP. Can catalyze the dehydratase reaction for beta-hydroxyacyl-ACPs with saturated chain lengths up to 16:0, being most active on intermediate chain length. This chain is 3-hydroxydecanoyl-[acyl-carrier-protein] dehydratase, found in Enterobacter sp. (strain 638).